Consider the following 306-residue polypeptide: Porphobilinogen deaminase (306 aa).

C239 carries the post-translational modification S-(dipyrrolylmethanemethyl)cysteine.

It belongs to the HMBS family. Monomer. Requires dipyrromethane as cofactor.

The enzyme catalyses 4 porphobilinogen + H2O = hydroxymethylbilane + 4 NH4(+). The protein operates within porphyrin-containing compound metabolism; protoporphyrin-IX biosynthesis; coproporphyrinogen-III from 5-aminolevulinate: step 2/4. In terms of biological role, tetrapolymerization of the monopyrrole PBG into the hydroxymethylbilane pre-uroporphyrinogen in several discrete steps. The polypeptide is Porphobilinogen deaminase (Helicobacter pylori (strain Shi470)).